The primary structure comprises 627 residues: Phosphomethylpyrimidine synthase (627 aa).

Residues 1-21 show a composition bias toward polar residues; it reads MSAQQQKNLSESAQVDQQSVQ. Positions 1-32 are disordered; it reads MSAQQQKNLSESAQVDQQSVQPFPRSQKVYVQ. Substrate is bound by residues Asn231, Met260, Tyr289, His325, 345-347, 386-389, and Glu425; these read SRG and DGLR. His429 serves as a coordination point for Zn(2+). Tyr452 contributes to the substrate binding site. His493 is a binding site for Zn(2+). [4Fe-4S] cluster contacts are provided by Cys573, Cys576, and Cys581.

It belongs to the ThiC family. As to quaternary structure, homodimer. [4Fe-4S] cluster serves as cofactor.

It catalyses the reaction 5-amino-1-(5-phospho-beta-D-ribosyl)imidazole + S-adenosyl-L-methionine = 4-amino-2-methyl-5-(phosphooxymethyl)pyrimidine + CO + 5'-deoxyadenosine + formate + L-methionine + 3 H(+). It participates in cofactor biosynthesis; thiamine diphosphate biosynthesis. Its function is as follows. Catalyzes the synthesis of the hydroxymethylpyrimidine phosphate (HMP-P) moiety of thiamine from aminoimidazole ribotide (AIR) in a radical S-adenosyl-L-methionine (SAM)-dependent reaction. The polypeptide is Phosphomethylpyrimidine synthase (Ectopseudomonas mendocina (strain ymp) (Pseudomonas mendocina)).